The sequence spans 319 residues: Proline hydroxylase buaE (319 aa).

Positions 168 to 280 (NSSELRLNHY…RYSIAYFGKP (113 aa)) constitute a Fe2OG dioxygenase domain. Positions 195, 197, and 255 each coordinate Fe cation. Residue Arg271 coordinates 2-oxoglutarate.

This sequence belongs to the iron/ascorbate-dependent oxidoreductase family. Requires Fe(2+) as cofactor.

The protein operates within mycotoxin biosynthesis. Functionally, proline hydroxylase; part of the gene cluster that mediates the biosynthesis of burnettramic acids, an unusual class of bolaamphiphilic pyrrolizidinediones that display potent antibacterial, antifungal, and cytotoxic activities. The first step of the biosynthesis of burnettramic acids is the hydroxylation of proline by the proline hydroxylase buaE to generate 4-hydroxyproline. The PKS-NRPS buaA and trans-enoyl reductase buaC construct the highly reduced polyketide chain, and the condensation (C) domain of buaA then catalyzes the amide bond formation with the activated 4-hydroxyproline. This is followed by the R domain releasing the nascent polyketide-peptide directly via a Dieckmann condensation to afford a tetramic acid fused to the hydroxyproline, generating the bicyclic pyrrolidinedione moiety. The cytochrome P450 monooxygenases buaD and buaG are likely responsible for the multiple hydroxylations on the polyketide chain and its terminus, although in the heterologous context, buaD does not appear to be required. Therefore, while buaG may be a multifunctional cytochrome P450 monooxygenase, it cannot be ruled out that the two secondary alcohols on the polyketide chain could have an acetate origin. Finally, the glycosyltransferase buaB transfers beta-D-mannose to the aglycone burnettramic acid A to form burnettramic acid A. Burnettramic acid B is a minor cis-pyrrolizidine epimer of burnettramic acid A and it is likely that small amounts of it form naturally in acidic environments. The polypeptide is Proline hydroxylase buaE (Petromyces alliaceus (Aspergillus alliaceus)).